Reading from the N-terminus, the 339-residue chain is MEILLQKVYDQENLSKEEMNIIATEIFEGRLSKTKMAAFLMALKVKGETAEEMAGIAQAMQQVAIQVAFPAGTAMDNCGTGGDKSNSFNISTTSAFVLAAAGIPVAKHGNRSISSRSGSADVCQELGIDINLRPEDMTYLLEKVGIAFLFAPHVHPNMKYVMDVRKELGTPTIFNLIGPLTNPVHLETQLMGIYRRDLLEQTAEVLGQLGRKRAVVLNGAGFMDEASLAGENHYALYENGEVHLYTLRPEDVGLTSYPLEAITGGDAKENAAILRSVLEGEPGAYLDTVLLNAGFGLFANGKVETVQEGVDLAKDLISSGLAKQKLADLITYQKEVLAK.

5-phospho-alpha-D-ribose 1-diphosphate-binding positions include Gly-79, 82 to 83, Ser-87, 89 to 92, 107 to 115, and Ser-119; these read GD, NIST, and KHGNRSISS. Residue Gly-79 coordinates anthranilate. Mg(2+) is bound at residue Ser-91. Asn-110 contributes to the anthranilate binding site. Residue Arg-165 coordinates anthranilate. Residues Asp-224 and Glu-225 each contribute to the Mg(2+) site.

This sequence belongs to the anthranilate phosphoribosyltransferase family. As to quaternary structure, homodimer. Mg(2+) is required as a cofactor.

It carries out the reaction N-(5-phospho-beta-D-ribosyl)anthranilate + diphosphate = 5-phospho-alpha-D-ribose 1-diphosphate + anthranilate. The protein operates within amino-acid biosynthesis; L-tryptophan biosynthesis; L-tryptophan from chorismate: step 2/5. Its function is as follows. Catalyzes the transfer of the phosphoribosyl group of 5-phosphorylribose-1-pyrophosphate (PRPP) to anthranilate to yield N-(5'-phosphoribosyl)-anthranilate (PRA). The protein is Anthranilate phosphoribosyltransferase of Listeria monocytogenes serovar 1/2a (strain ATCC BAA-679 / EGD-e).